The chain runs to 396 residues: Deoxyguanosinetriphosphate triphosphohydrolase-like protein (396 aa).

An HD domain is found at 62-198; the sequence is RLTHSLEVAQ…AALADDIAYN (137 aa).

It belongs to the dGTPase family. Type 2 subfamily.

The protein is Deoxyguanosinetriphosphate triphosphohydrolase-like protein of Jannaschia sp. (strain CCS1).